Here is a 90-residue protein sequence, read N- to C-terminus: U7-theraphotoxin-Hhn1a 6 (90 aa).

The N-terminal stretch at 1–19 (MKTAIFTVVLALAVFAVLS) is a signal peptide. Positions 20–50 (FGWEANEKALSEEFTELIHEKEAASEAEARE) are excised as a propeptide. Disulfide bonds link cysteine 51-cysteine 65, cysteine 58-cysteine 70, and cysteine 64-cysteine 81.

The protein belongs to the neurotoxin 10 (Hwtx-1) family. 13 (Hntx-13) subfamily. As to expression, expressed by the venom gland.

It localises to the secreted. Functionally, ion channel inhibitor. The polypeptide is U7-theraphotoxin-Hhn1a 6 (Cyriopagopus hainanus (Chinese bird spider)).